The primary structure comprises 387 residues: Eukaryotic translation initiation factor 3 subunit M (387 aa).

The 160-residue stretch at 181–340 (LSSKVMIELL…HKVHITSTMH (160 aa)) folds into the PCI domain.

This sequence belongs to the eIF-3 subunit M family. In terms of assembly, component of the eukaryotic translation initiation factor 3 (eIF-3) complex. The eIF-3 complex interacts with pix.

The protein resides in the cytoplasm. Its subcellular location is the golgi apparatus. Its function is as follows. Component of the eukaryotic translation initiation factor 3 (eIF-3) complex, which is involved in protein synthesis of a specialized repertoire of mRNAs and, together with other initiation factors, stimulates binding of mRNA and methionyl-tRNAi to the 40S ribosome. The eIF-3 complex specifically targets and initiates translation of a subset of mRNAs involved in cell proliferation. In Drosophila erecta (Fruit fly), this protein is Eukaryotic translation initiation factor 3 subunit M.